The sequence spans 166 residues: Large ribosomal subunit protein uL10 (166 aa).

It belongs to the universal ribosomal protein uL10 family. In terms of assembly, part of the ribosomal stalk of the 50S ribosomal subunit. The N-terminus interacts with L11 and the large rRNA to form the base of the stalk. The C-terminus forms an elongated spine to which L12 dimers bind in a sequential fashion forming a multimeric L10(L12)X complex.

In terms of biological role, forms part of the ribosomal stalk, playing a central role in the interaction of the ribosome with GTP-bound translation factors. This Streptococcus pyogenes serotype M28 (strain MGAS6180) protein is Large ribosomal subunit protein uL10.